The chain runs to 276 residues: Ribosomal RNA small subunit methyltransferase A (276 aa).

S-adenosyl-L-methionine-binding residues include N27, L29, G54, E75, D101, and N122.

The protein belongs to the class I-like SAM-binding methyltransferase superfamily. rRNA adenine N(6)-methyltransferase family. RsmA subfamily.

The protein localises to the cytoplasm. It carries out the reaction adenosine(1518)/adenosine(1519) in 16S rRNA + 4 S-adenosyl-L-methionine = N(6)-dimethyladenosine(1518)/N(6)-dimethyladenosine(1519) in 16S rRNA + 4 S-adenosyl-L-homocysteine + 4 H(+). Specifically dimethylates two adjacent adenosines (A1518 and A1519) in the loop of a conserved hairpin near the 3'-end of 16S rRNA in the 30S particle. May play a critical role in biogenesis of 30S subunits. This chain is Ribosomal RNA small subunit methyltransferase A, found in Brucella suis (strain ATCC 23445 / NCTC 10510).